The following is a 214-amino-acid chain: Thymidylate kinase (214 aa).

An ATP-binding site is contributed by 15–22; that stretch reads GLEGAGKT.

It belongs to the thymidylate kinase family.

It carries out the reaction dTMP + ATP = dTDP + ADP. Its function is as follows. Phosphorylation of dTMP to form dTDP in both de novo and salvage pathways of dTTP synthesis. The chain is Thymidylate kinase from Haemophilus ducreyi (strain 35000HP / ATCC 700724).